A 396-amino-acid chain; its full sequence is Acetyl-CoA acetyltransferase (396 aa).

The active-site Acyl-thioester intermediate is Cys88. Residues His352 and Cys382 each act as proton acceptor in the active site.

It belongs to the thiolase-like superfamily. Thiolase family. In terms of assembly, homotetramer.

The enzyme catalyses 2 acetyl-CoA = acetoacetyl-CoA + CoA. Its pathway is biopolymer metabolism; poly-(R)-3-hydroxybutanoate biosynthesis. When expressed in E.coli with Synechocystis PhaB, PhaC and PhaE confers the ability to synthesize up to 12% (w/w) poly(3-hydroxybutyrate) (PHB) depending on the carbon source. This is Acetyl-CoA acetyltransferase from Synechocystis sp. (strain ATCC 27184 / PCC 6803 / Kazusa).